A 202-amino-acid chain; its full sequence is Na(+)-translocating NADH-quinone reductase subunit E (202 aa).

6 helical membrane passes run leucine 4–glycine 24, isoleucine 35–isoleucine 55, phenylalanine 81–phenylalanine 101, glycine 114–valine 134, leucine 144–valine 164, and leucine 180–isoleucine 200.

It belongs to the NqrDE/RnfAE family. In terms of assembly, composed of six subunits; NqrA, NqrB, NqrC, NqrD, NqrE and NqrF.

The protein resides in the cell inner membrane. The enzyme catalyses a ubiquinone + n Na(+)(in) + NADH + H(+) = a ubiquinol + n Na(+)(out) + NAD(+). In terms of biological role, NQR complex catalyzes the reduction of ubiquinone-1 to ubiquinol by two successive reactions, coupled with the transport of Na(+) ions from the cytoplasm to the periplasm. NqrA to NqrE are probably involved in the second step, the conversion of ubisemiquinone to ubiquinol. This Nitrosomonas europaea (strain ATCC 19718 / CIP 103999 / KCTC 2705 / NBRC 14298) protein is Na(+)-translocating NADH-quinone reductase subunit E.